Here is a 299-residue protein sequence, read N- to C-terminus: Probable alpha-L-glutamate ligase (299 aa).

The ATP-grasp domain maps to 104–287 (LQLLAREGIE…VSGKIIEFLE (184 aa)). Residues K141, 178 to 179 (EF), D187, and 211 to 213 (RSN) contribute to the ATP site. Positions 248, 260, and 262 each coordinate Mg(2+). 3 residues coordinate Mn(2+): D248, E260, and N262.

Belongs to the RimK family. The cofactor is Mg(2+). Mn(2+) serves as cofactor.

This chain is Probable alpha-L-glutamate ligase, found in Trichodesmium erythraeum (strain IMS101).